A 355-amino-acid chain; its full sequence is tRNA (guanine-N(1)-)-methyltransferase (355 aa).

S-adenosyl-L-methionine contacts are provided by residues Gly109 and 129 to 134 (IGDYVL).

This sequence belongs to the RNA methyltransferase TrmD family. As to quaternary structure, homodimer.

It localises to the cytoplasm. The catalysed reaction is guanosine(37) in tRNA + S-adenosyl-L-methionine = N(1)-methylguanosine(37) in tRNA + S-adenosyl-L-homocysteine + H(+). Functionally, specifically methylates guanosine-37 in various tRNAs. This chain is tRNA (guanine-N(1)-)-methyltransferase, found in Chlamydia caviae (strain ATCC VR-813 / DSM 19441 / 03DC25 / GPIC) (Chlamydophila caviae).